Reading from the N-terminus, the 364-residue chain is Endoglucanase A (364 aa).

Catalysis depends on glutamate 169, which acts as the Proton donor. Glutamate 293 serves as the catalytic Nucleophile.

Belongs to the glycosyl hydrolase 5 (cellulase A) family.

The protein localises to the cytoplasm. The enzyme catalyses Endohydrolysis of (1-&gt;4)-beta-D-glucosidic linkages in cellulose, lichenin and cereal beta-D-glucans.. It catalyses the reaction Endohydrolysis of (1-&gt;4)-beta-D-xylosidic linkages in xylans.. Hydrolyzes both carboxymethylcellulose and xylan. Probably has a role in hydrolyzing oligosaccharides derived from cellulose, which are transported across the cell wall. This chain is Endoglucanase A (celA), found in Ruminococcus albus.